A 524-amino-acid chain; its full sequence is MQLTLWTYEGPPHVGAMRIAASMRGVHYVLHAPQGDTYADLLFTMIERRGQRPPVTYTTFQARDLGGDTAELVKRHVREAVDRFQPDALLVGESCTAELIQDQPGALAQGMGLTMPVVSLELPAYSKKENWGAAETFYQMVRNLLKEQTPANNQHDPMTWQHQGRRPRVNLLGPSLLGFRCRDDVLEVQKLLTLHGIDVGVVAPLGAGVEDLKRIPDADLNVCLYPEVAESSCSWLERNFGMPFSRTVPIGVGATHDFLVEVHDMLGMEPPAPDEGYRRSRLPWYSESVDSTYLTGKRVFIFGDGSHALAAARICSEELGFTVVGLGTYSREMARPVRAAAKALGLEALISDDYLAVEAAMAKAAPELVLGTQMERHSAKRLGIPCAVISTPMHVQDVPARMSPQMGWEGANVIFDDWVHPLMMGLEEHLIGMFRHDFEFVDGHQSHLGHTGGAGAADHSALTDIPADGDDALHWTADGEAELKKIPFFVRGKVRRNTEAYARDVGCRVINSETLYDAKAHFKA.

Residue Asp-36 coordinates [4Fe-4S] cluster. Catalysis depends on Asp-290, which acts as the Proton donor. Residue 425-426 coordinates substrate; the sequence is GL.

This sequence belongs to the ChlB/BchB/BchZ family. As to quaternary structure, protochlorophyllide reductase is composed of three subunits; ChlL, ChlN and ChlB. Forms a heterotetramer of two ChlB and two ChlN subunits. [4Fe-4S] cluster is required as a cofactor.

It carries out the reaction chlorophyllide a + oxidized 2[4Fe-4S]-[ferredoxin] + 2 ADP + 2 phosphate = protochlorophyllide a + reduced 2[4Fe-4S]-[ferredoxin] + 2 ATP + 2 H2O. The protein operates within porphyrin-containing compound metabolism; chlorophyll biosynthesis (light-independent). Functionally, component of the dark-operative protochlorophyllide reductase (DPOR) that uses Mg-ATP and reduced ferredoxin to reduce ring D of protochlorophyllide (Pchlide) to form chlorophyllide a (Chlide). This reaction is light-independent. The NB-protein (ChlN-ChlB) is the catalytic component of the complex. In Synechococcus sp. (strain CC9605), this protein is Light-independent protochlorophyllide reductase subunit B.